The sequence spans 386 residues: Histidine decarboxylase (386 aa).

Residue His120 participates in substrate binding. An N6-(pyridoxal phosphate)lysine modification is found at Lys233.

This sequence belongs to the group II decarboxylase family. As to quaternary structure, homotetramer. It depends on pyridoxal 5'-phosphate as a cofactor.

The enzyme catalyses L-histidine + H(+) = histamine + CO2. It participates in siderophore biosynthesis; anguibactin biosynthesis. The chain is Histidine decarboxylase from Vibrio anguillarum (strain ATCC 68554 / 775) (Listonella anguillarum).